We begin with the raw amino-acid sequence, 218 residues long: Small ribosomal subunit protein uS3 (218 aa).

The KH type-2 domain occupies 38–106 (IRKFIATKLA…RVHINIVEIK (69 aa)).

The protein belongs to the universal ribosomal protein uS3 family. In terms of assembly, part of the 30S ribosomal subunit. Forms a tight complex with proteins S10 and S14.

Functionally, binds the lower part of the 30S subunit head. Binds mRNA in the 70S ribosome, positioning it for translation. The protein is Small ribosomal subunit protein uS3 of Enterococcus faecalis (strain ATCC 700802 / V583).